A 230-amino-acid polypeptide reads, in one-letter code: Enolase-phosphatase E1 (230 aa).

The protein belongs to the HAD-like hydrolase superfamily. MasA/MtnC family. Monomer. It depends on Mg(2+) as a cofactor.

It carries out the reaction 5-methylsulfanyl-2,3-dioxopentyl phosphate + H2O = 1,2-dihydroxy-5-(methylsulfanyl)pent-1-en-3-one + phosphate. It participates in amino-acid biosynthesis; L-methionine biosynthesis via salvage pathway; L-methionine from S-methyl-5-thio-alpha-D-ribose 1-phosphate: step 3/6. The protein operates within amino-acid biosynthesis; L-methionine biosynthesis via salvage pathway; L-methionine from S-methyl-5-thio-alpha-D-ribose 1-phosphate: step 4/6. Bifunctional enzyme that catalyzes the enolization of 2,3-diketo-5-methylthiopentyl-1-phosphate (DK-MTP-1-P) into the intermediate 2-hydroxy-3-keto-5-methylthiopentenyl-1-phosphate (HK-MTPenyl-1-P), which is then dephosphorylated to form the acireductone 1,2-dihydroxy-3-keto-5-methylthiopentene (DHK-MTPene). This is Enolase-phosphatase E1 from Marinobacter nauticus (strain ATCC 700491 / DSM 11845 / VT8) (Marinobacter aquaeolei).